A 236-amino-acid chain; its full sequence is Alpha-acetolactate decarboxylase (236 aa).

It belongs to the alpha-acetolactate decarboxylase family.

The enzyme catalyses (2S)-2-acetolactate + H(+) = (R)-acetoin + CO2. The protein operates within polyol metabolism; (R,R)-butane-2,3-diol biosynthesis; (R,R)-butane-2,3-diol from pyruvate: step 2/3. Functionally, converts acetolactate into acetoin. This chain is Alpha-acetolactate decarboxylase (aldB), found in Lactococcus lactis subsp. cremoris (strain MG1363).